The sequence spans 965 residues: Phosphoenolpyruvate carboxylase (965 aa).

Ser-11 is subject to Phosphoserine. Catalysis depends on residues His-173 and Lys-601.

This sequence belongs to the PEPCase type 1 family. In terms of assembly, homotetramer. Requires Mg(2+) as cofactor.

It is found in the cytoplasm. It carries out the reaction oxaloacetate + phosphate = phosphoenolpyruvate + hydrogencarbonate. It functions in the pathway photosynthesis; C3 acid pathway. With respect to regulation, by light-reversible phosphorylation. Through the carboxylation of phosphoenolpyruvate (PEP) it forms oxaloacetate, a four-carbon dicarboxylic acid source for the tricarboxylic acid cycle. The protein is Phosphoenolpyruvate carboxylase (PPC1) of Solanum tuberosum (Potato).